Consider the following 116-residue polypeptide: MRHRCRVPQLGKPADQRKALLRALTTELIRHGQIKTTKARAKAVRSEVDRMITLAKDGSLAARRRALGYMYDKPTVHALFADAPSRYKDRDGGYTRIIRTLRRRGDNAEMAVIELV.

This sequence belongs to the bacterial ribosomal protein bL17 family. As to quaternary structure, part of the 50S ribosomal subunit. Contacts protein L32.

This chain is Large ribosomal subunit protein bL17, found in Synechocystis sp. (strain ATCC 27184 / PCC 6803 / Kazusa).